The chain runs to 378 residues: Phospho-N-acetylmuramoyl-pentapeptide-transferase (378 aa).

The next 10 membrane-spanning stretches (helical) occupy residues 27–47 (TAFASLTALFLCIALGPWLIN), 74–94 (TMGGVLIVISIVIPTLLWADL), 96–116 (YPYVWIALAGLLGYGWIGFLD), 135–155 (LVYQFIMGFAFAASLLVMRAY), 184–204 (WTYVIGVAPFCIFVALVVVFY), 216–236 (GLAIGLMVIAAGALTVLAYAG), 256–276 (LTIFCGSMTGASLGFLWYNAH), 280–300 (IFMGDVGSLGLGGAMAVVAVL), 305–325 (ILLLFIGGIFVLEAFSVILQV), and 355–375 (KIIARFWIAGLVLALFALTTL).

The protein belongs to the glycosyltransferase 4 family. MraY subfamily. Mg(2+) is required as a cofactor.

The protein resides in the cell inner membrane. It catalyses the reaction UDP-N-acetyl-alpha-D-muramoyl-L-alanyl-gamma-D-glutamyl-meso-2,6-diaminopimeloyl-D-alanyl-D-alanine + di-trans,octa-cis-undecaprenyl phosphate = di-trans,octa-cis-undecaprenyl diphospho-N-acetyl-alpha-D-muramoyl-L-alanyl-D-glutamyl-meso-2,6-diaminopimeloyl-D-alanyl-D-alanine + UMP. It participates in cell wall biogenesis; peptidoglycan biosynthesis. Its function is as follows. Catalyzes the initial step of the lipid cycle reactions in the biosynthesis of the cell wall peptidoglycan: transfers peptidoglycan precursor phospho-MurNAc-pentapeptide from UDP-MurNAc-pentapeptide onto the lipid carrier undecaprenyl phosphate, yielding undecaprenyl-pyrophosphoryl-MurNAc-pentapeptide, known as lipid I. In Solibacter usitatus (strain Ellin6076), this protein is Phospho-N-acetylmuramoyl-pentapeptide-transferase.